Here is a 71-residue protein sequence, read N- to C-terminus: uncharacterized protein (71 aa).

This is an uncharacterized protein from Lepidoptera (butterflies and moths).